A 539-amino-acid polypeptide reads, in one-letter code: Phosphoenolpyruvate carboxykinase (ATP) (539 aa).

Substrate is bound by residues Arg-64, Tyr-206, and Lys-212. ATP contacts are provided by residues Lys-212, His-231, and 247–255; that span reads GLSGTGKTT. Mn(2+) is bound by residues Lys-212 and His-231. A Mn(2+)-binding site is contributed by Asp-268. Residues Glu-296, Arg-332, 448–449, and Thr-454 each bind ATP; that span reads RI. Residue Arg-332 coordinates substrate.

The protein belongs to the phosphoenolpyruvate carboxykinase (ATP) family. In terms of assembly, monomer. Mn(2+) serves as cofactor.

It localises to the cytoplasm. It catalyses the reaction oxaloacetate + ATP = phosphoenolpyruvate + ADP + CO2. It participates in carbohydrate biosynthesis; gluconeogenesis. Involved in the gluconeogenesis. Catalyzes the conversion of oxaloacetate (OAA) to phosphoenolpyruvate (PEP) through direct phosphoryl transfer between the nucleoside triphosphate and OAA. This chain is Phosphoenolpyruvate carboxykinase (ATP), found in Hamiltonella defensa subsp. Acyrthosiphon pisum (strain 5AT).